Here is a 374-residue protein sequence, read N- to C-terminus: Cell division protein DivIB (374 aa).

Residues 1–90 are disordered; it reads MWKISNENDI…EEEHFADRLP (90 aa). The Cytoplasmic portion of the chain corresponds to 1–103; that stretch reads MWKISNENDI…KTRNKRLYRR (103 aa). The segment covering 39-53 has biased composition (basic and acidic residues); it reads YLKKQAEEAASKGEN. A compositionally biased stretch (polar residues) spans 56–75; it reads AEVTITLQEQSQEEPQQHLP. The helical transmembrane segment at 104 to 124 threads the bilayer; it reads LAFILTCLGTAILVALYFVSP. Over 125 to 374 the chain is Extracellular; it reads LSRLSEVTVS…GENQEVQQAE (250 aa). A POTRA domain is found at 126 to 197; sequence SRLSEVTVSG…NSFKIDIQEY (72 aa). The tract at residues 325–374 is disordered; that stretch reads KESEETGSEVSEDSAVENQEVVDPNAGVATDGANNGTPTNGENQEVQQAE. The span at 326–339 shows a compositional bias: acidic residues; sequence ESEETGSEVSEDSA. Residues 356–374 show a composition bias toward polar residues; that stretch reads GANNGTPTNGENQEVQQAE.

The protein belongs to the FtsQ/DivIB family. DivIB subfamily.

It localises to the cell membrane. In terms of biological role, cell division protein that may be involved in stabilizing or promoting the assembly of the division complex. The protein is Cell division protein DivIB of Enterococcus faecalis (strain 62).